Here is an 808-residue protein sequence, read N- to C-terminus: Phenylalanine--tRNA ligase beta subunit (808 aa).

One can recognise a tRNA-binding domain in the interval 40–149 (RPELDFVKIV…DQAEVGKTIR (110 aa)). The region spanning 407–484 (HKEVRIHTDI…RTKGYDTIQV (78 aa)) is the B5 domain. Residues Asp-462, Asp-468, Glu-471, and Glu-472 each contribute to the Mg(2+) site. Residues 716–808 (SQFPEAEIDL…LAGKNGFVLR (93 aa)) form the FDX-ACB domain.

It belongs to the phenylalanyl-tRNA synthetase beta subunit family. Type 1 subfamily. As to quaternary structure, tetramer of two alpha and two beta subunits. Mg(2+) is required as a cofactor.

The protein localises to the cytoplasm. It catalyses the reaction tRNA(Phe) + L-phenylalanine + ATP = L-phenylalanyl-tRNA(Phe) + AMP + diphosphate + H(+). In Leptospira interrogans serogroup Icterohaemorrhagiae serovar copenhageni (strain Fiocruz L1-130), this protein is Phenylalanine--tRNA ligase beta subunit.